A 306-amino-acid polypeptide reads, in one-letter code: Palmitoyl-protein thioesterase ABHD10, mitochondrial (306 aa).

Residues 1–52 (MAVARLAAVAAWVPCRSWGWAAVPFGPHRGLSVLLARIPQRAPRWLPACRQK) constitute a mitochondrion transit peptide. The 101-residue stretch at 78 to 178 (IIFIPGYLSY…VVALIGVATA (101 aa)) folds into the AB hydrolase-1 domain. Residues serine 152, aspartate 249, and histidine 279 each act as charge relay system in the active site.

This sequence belongs to the AB hydrolase superfamily.

The protein resides in the mitochondrion. It carries out the reaction S-hexadecanoyl-L-cysteinyl-[protein] + H2O = L-cysteinyl-[protein] + hexadecanoate + H(+). It catalyses the reaction mycophenolic acid O-acyl-beta-D-glucuronide + H2O = mycophenolate + D-glucuronate + H(+). Its activity is regulated as follows. Inhibited by palmostatin-B. Functionally, acts as an acyl-protein thioesterase that hydrolyzes fatty acids from acylated residues in proteins. Regulates the mitochondrial S-depalmitoylation of the nucleophilic active site residue of peroxiredoxin-5/PRDX5, a key antioxidant protein, therefore modulating mitochondrial antioxidant ability. Also catalyzes the deglucuronidation of mycophenolic acid acyl-glucuronide, an active metabolite of the immunosuppressant drug mycophenolate. The sequence is that of Palmitoyl-protein thioesterase ABHD10, mitochondrial from Homo sapiens (Human).